The following is a 474-amino-acid chain: DNA-binding protein (474 aa).

The disordered stretch occupies residues 1–34 (MAGRQREHPTVTPYLQETSPERPPPLPPKKKLRK). Phosphotyrosine; by host is present on Tyr142. Zn(2+) is bound by residues Cys231 and His233. Residues 244 to 278 (VEVDVGSENGQRALKEQPSKTKVVQNRWGRSVVQI) are flexible loop. Residues Cys286, Cys302, Cys343, Cys345, Cys397, and Cys413 each contribute to the Zn(2+) site. The C-terminal arm, DBP binding stretch occupies residues 460-474 (VALPTGHGDAEVEPF).

This sequence belongs to the adenoviridae E2A DNA-binding protein family. Homomultimerizes on viral ssDNA bound to pTP. Forms a initiation complex with viral polymerase, pTP and hosts NFIA and POU2F1/OCT1. Interacts with host SRCAP.

It is found in the host nucleus. In terms of biological role, plays a role in the elongation phase of viral strand displacement replication by unwinding the template in an ATP-independent fashion, employing its capacity to form multimers. Also enhances the rate of initiation. Released from template upon second strand synthesis. Assembles in complex with viral pTP, viral pol, host NFIA and host POU2F1/OCT1 on viral origin of replication. Covers the whole ssDNA genome during synthesis. The complementary strand synthesis induces its relese from DNA template. May inhibit cellular transcription mediated by the interaction between host SRCAP and CBP. The polypeptide is DNA-binding protein (Homo sapiens (Human)).